The following is a 149-amino-acid chain: Alpha-crystallin A chain (149 aa).

A sHSP domain is found at 41 to 149 (LFRSVLESGI…DPSHSERPIP (109 aa)). Zn(2+)-binding residues include His-89, Glu-91, His-96, and His-143.

Belongs to the small heat shock protein (HSP20) family. In terms of assembly, heteropolymer composed of three CRYAA and one CRYAB subunits. Inter-subunit bridging via zinc ions enhances stability, which is crucial as there is no protein turn over in the lens. Can also form homodimers and homotetramers (dimers of dimers) which serve as the building blocks of homooligomers. Within homooligomers, the zinc-binding motif is created from residues of 3 different molecules. His-89 and Glu-91 from one molecule are ligands of the zinc ion, and His-96 and His-143 residues from additional molecules complete the site with tetrahedral coordination geometry.

It is found in the cytoplasm. The protein localises to the nucleus. In terms of biological role, contributes to the transparency and refractive index of the lens. May act as a chaperone, preventing aggregation of various proteins under a wide range of stress conditions. This Eudromia elegans (Elegant crested-tinamou) protein is Alpha-crystallin A chain (CRYAA).